A 373-amino-acid polypeptide reads, in one-letter code: GTPase Obg (373 aa).

Positions 1–159 (MKFIDEARIE…RMVRLELKVL (159 aa)) constitute an Obg domain. The disordered stretch occupies residues 128 to 147 (LHFKSSTNRAPRQKTDGKPG). The region spanning 160-334 (ADVGLLGMPN…LCYAVFDHIS (175 aa)) is the OBG-type G domain. Residues 166–173 (GMPNAGKS), 191–195 (FTTLA), 213–216 (DIPG), 284–287 (NKLD), and 315–317 (SAL) contribute to the GTP site. Residues Ser173 and Thr193 each coordinate Mg(2+). Residues 354–373 (FREKPQAPAAADDAGTDPQV) form a disordered region. Residues 359 to 373 (QAPAAADDAGTDPQV) show a composition bias toward low complexity.

It belongs to the TRAFAC class OBG-HflX-like GTPase superfamily. OBG GTPase family. Monomer. Requires Mg(2+) as cofactor.

Its subcellular location is the cytoplasm. In terms of biological role, an essential GTPase which binds GTP, GDP and possibly (p)ppGpp with moderate affinity, with high nucleotide exchange rates and a fairly low GTP hydrolysis rate. Plays a role in control of the cell cycle, stress response, ribosome biogenesis and in those bacteria that undergo differentiation, in morphogenesis control. The protein is GTPase Obg of Paraburkholderia phytofirmans (strain DSM 17436 / LMG 22146 / PsJN) (Burkholderia phytofirmans).